We begin with the raw amino-acid sequence, 136 residues long: Large ribosomal subunit protein uL16c (136 aa).

The interval 1-20 (MLSPKRTKFRKQHRGRMKGK) is disordered.

Belongs to the universal ribosomal protein uL16 family. Part of the 50S ribosomal subunit.

The protein resides in the plastid. It is found in the chloroplast. The polypeptide is Large ribosomal subunit protein uL16c (Brachypodium distachyon (Purple false brome)).